We begin with the raw amino-acid sequence, 581 residues long: AP2-like ethylene-responsive transcription factor AIL6 (581 aa).

Disordered regions lie at residues 105–132 and 205–240; these read VRYS…HHNQ and NNTN…TDSE. 2 stretches are compositionally biased toward low complexity: residues 108 to 122 and 218 to 232; these read SDNS…SLTQ and RGNN…NNNN. 2 consecutive DNA-binding regions (AP2/ERF) follow at residues 268 to 331 and 367 to 425; these read IYRG…TNFP and IYRG…TNFE.

It belongs to the AP2/ERF transcription factor family. AP2 subfamily. As to expression, expressed in roots, seedlings, hypocotyl, inflorescence, siliques, and pistils. Also detected at low levels in leaves.

The protein resides in the nucleus. Probably acts as a transcriptional activator. Binds to the GCC-box pathogenesis-related promoter element. May be involved in the regulation of gene expression by stress factors and by components of stress signal transduction pathways. This Arabidopsis thaliana (Mouse-ear cress) protein is AP2-like ethylene-responsive transcription factor AIL6.